Reading from the N-terminus, the 532-residue chain is Cytochrome c oxidase subunit 1 (532 aa).

3 helical membrane passes run 1–21, 27–47, and 69–89; these read MWDYVKLVALGVVAAIAAYAA, LPYMVNMVEVALAAVIALIWV, and GVIATTFWGIVGFLVAVVIAF. H114 serves as a coordination point for heme b. Helical transmembrane passes span 115 to 135, 143 to 163, 185 to 205, 212 to 232, 263 to 283, 296 to 316, 328 to 348, and 366 to 386; these read TSAVIFAFGGNALIASAFYVV, LFGGTALGWFVFWGWQLIIVT, LDILVAVVWVAYLIAFLGTIF, IYVANWFYLSFIVTIAMLHIV, GHNAVGFFLTAGFLGMMYYFV, LSIVHFWALIFLYIWAGPHHL, LGMVMSVILWMPSWGGMINGL, and MMVVSIGFYGMSTFEGPMMSI. Cu cation is bound by residues H264, H314, and H315. Positions 402 and 404 each coordinate heme b. The next 3 membrane-spanning stretches (helical) occupy residues 403 to 423, 442 to 462, and 496 to 516; these read VHSGALGWNGMITFGMLYFLT, FWLATIGIVLYASAMWVTGIM, and VGGVLYLLGGLIMAYNLWATV.

It belongs to the heme-copper respiratory oxidase family. Cu(2+) serves as cofactor. Heme b is required as a cofactor.

The protein localises to the cell membrane. The catalysed reaction is 4 Fe(II)-[cytochrome c] + O2 + 8 H(+)(in) = 4 Fe(III)-[cytochrome c] + 2 H2O + 4 H(+)(out). It participates in energy metabolism; oxidative phosphorylation. Cytochrome c oxidase is the component of the respiratory chain that catalyzes the reduction of oxygen to water. Subunits 1-3 form the functional core of the enzyme complex. Co I is the catalytic subunit of the enzyme. Electrons originating in cytochrome c are transferred via the copper A center of subunit 2 and heme a of subunit 1 to the bimetallic center formed by heme a3 and copper B. This cytochrome c oxidase shows proton pump activity across the membrane in addition to the electron transfer. This is Cytochrome c oxidase subunit 1 (ctaD) from Rhodobacter capsulatus (Rhodopseudomonas capsulata).